The primary structure comprises 149 residues: Large ribosomal subunit protein bL9 (149 aa).

The protein belongs to the bacterial ribosomal protein bL9 family.

Functionally, binds to the 23S rRNA. The chain is Large ribosomal subunit protein bL9 from Sulfurihydrogenibium sp. (strain YO3AOP1).